Reading from the N-terminus, the 398-residue chain is Phosphomevalonate dehydratase large subunit (398 aa).

Residues Gly-48, Val-49, Ser-50, Asn-76, and Pro-77 each contribute to the (R)-5-phosphomevalonate site. Cys-116 serves as a coordination point for [4Fe-4S] cluster. Positions 136 and 137 each coordinate (R)-5-phosphomevalonate. Positions 287 and 342 each coordinate [4Fe-4S] cluster. Lys-361 contacts (R)-5-phosphomevalonate.

Belongs to the AcnX type II large subunit family. Heterodimer composed of a large subunit (PMDh-L) and a small subunit (PMDh-S). [4Fe-4S] cluster serves as cofactor.

The enzyme catalyses (R)-5-phosphomevalonate = (2E)-3-methyl-5-phosphooxypent-2-enoate + H2O. It participates in isoprenoid biosynthesis; isopentenyl diphosphate biosynthesis via mevalonate pathway. Component of a hydro-lyase that catalyzes the dehydration of mevalonate 5-phosphate (MVA5P) to form trans-anhydromevalonate 5-phosphate (tAHMP). Involved in the archaeal mevalonate (MVA) pathway, which provides fundamental precursors for isoprenoid biosynthesis, such as isopentenyl diphosphate (IPP) and dimethylallyl diphosphate (DMAPP). This Methanosarcina mazei (strain ATCC BAA-159 / DSM 3647 / Goe1 / Go1 / JCM 11833 / OCM 88) (Methanosarcina frisia) protein is Phosphomevalonate dehydratase large subunit.